Here is a 482-residue protein sequence, read N- to C-terminus: Glutamyl-tRNA(Gln) amidotransferase subunit A (482 aa).

Active-site charge relay system residues include Lys75 and Ser150. Ser174 serves as the catalytic Acyl-ester intermediate.

This sequence belongs to the amidase family. GatA subfamily. In terms of assembly, heterotrimer of A, B and C subunits.

It carries out the reaction L-glutamyl-tRNA(Gln) + L-glutamine + ATP + H2O = L-glutaminyl-tRNA(Gln) + L-glutamate + ADP + phosphate + H(+). Its function is as follows. Allows the formation of correctly charged Gln-tRNA(Gln) through the transamidation of misacylated Glu-tRNA(Gln) in organisms which lack glutaminyl-tRNA synthetase. The reaction takes place in the presence of glutamine and ATP through an activated gamma-phospho-Glu-tRNA(Gln). The polypeptide is Glutamyl-tRNA(Gln) amidotransferase subunit A (Acaryochloris marina (strain MBIC 11017)).